The sequence spans 406 residues: Acetylornithine/succinyldiaminopimelate aminotransferase (406 aa).

Pyridoxal 5'-phosphate contacts are provided by residues 108 to 109 (GT) and phenylalanine 141. Residue arginine 144 coordinates N(2)-acetyl-L-ornithine. 226 to 229 (DEVQ) is a pyridoxal 5'-phosphate binding site. Lysine 255 carries the post-translational modification N6-(pyridoxal phosphate)lysine. Residue serine 283 coordinates N(2)-acetyl-L-ornithine. Threonine 284 contacts pyridoxal 5'-phosphate.

Belongs to the class-III pyridoxal-phosphate-dependent aminotransferase family. ArgD subfamily. As to quaternary structure, homodimer. The cofactor is pyridoxal 5'-phosphate.

It localises to the cytoplasm. The enzyme catalyses N(2)-acetyl-L-ornithine + 2-oxoglutarate = N-acetyl-L-glutamate 5-semialdehyde + L-glutamate. It catalyses the reaction N-succinyl-(2S,6S)-2,6-diaminopimelate + 2-oxoglutarate = (S)-2-succinylamino-6-oxoheptanedioate + L-glutamate. It participates in amino-acid biosynthesis; L-arginine biosynthesis; N(2)-acetyl-L-ornithine from L-glutamate: step 4/4. It functions in the pathway amino-acid biosynthesis; L-lysine biosynthesis via DAP pathway; LL-2,6-diaminopimelate from (S)-tetrahydrodipicolinate (succinylase route): step 2/3. Its function is as follows. Involved in both the arginine and lysine biosynthetic pathways. This Escherichia coli O157:H7 protein is Acetylornithine/succinyldiaminopimelate aminotransferase.